The primary structure comprises 485 residues: CCA-adding enzyme (485 aa).

ATP contacts are provided by Ser53 and Arg56. CTP contacts are provided by Ser53 and Arg56. Residues Asp65, Asp67, and Asp124 each contribute to the Mg(2+) site. Residues His146, Lys164, and Tyr173 each coordinate ATP. The CTP site is built by His146, Lys164, and Tyr173.

It belongs to the tRNA nucleotidyltransferase/poly(A) polymerase family. Archaeal CCA-adding enzyme subfamily. As to quaternary structure, homodimer. The cofactor is Mg(2+).

The catalysed reaction is a tRNA precursor + 2 CTP + ATP = a tRNA with a 3' CCA end + 3 diphosphate. The enzyme catalyses a tRNA with a 3' CCA end + 2 CTP + ATP = a tRNA with a 3' CCACCA end + 3 diphosphate. Catalyzes the addition and repair of the essential 3'-terminal CCA sequence in tRNAs without using a nucleic acid template. Adds these three nucleotides in the order of C, C, and A to the tRNA nucleotide-73, using CTP and ATP as substrates and producing inorganic pyrophosphate. tRNA 3'-terminal CCA addition is required both for tRNA processing and repair. Also involved in tRNA surveillance by mediating tandem CCA addition to generate a CCACCA at the 3' terminus of unstable tRNAs. While stable tRNAs receive only 3'-terminal CCA, unstable tRNAs are marked with CCACCA and rapidly degraded. This is CCA-adding enzyme from Methanopyrus kandleri (strain AV19 / DSM 6324 / JCM 9639 / NBRC 100938).